The primary structure comprises 442 residues: D-serine dehydratase (442 aa).

Position 118 is an N6-(pyridoxal phosphate)lysine (Lys118).

This sequence belongs to the serine/threonine dehydratase family. DsdA subfamily. Monomer. Pyridoxal 5'-phosphate serves as cofactor.

It catalyses the reaction D-serine = pyruvate + NH4(+). In Shigella dysenteriae serotype 1 (strain Sd197), this protein is D-serine dehydratase.